A 138-amino-acid polypeptide reads, in one-letter code: Fluoride-specific ion channel FluC (138 aa).

Helical transmembrane passes span 34 to 54 (FMPK…GACA), 60 to 80 (MQFG…SFLM), 88 to 108 (FWGT…VVLV), and 112 to 132 (LPHA…AWLM). The Na(+) site is built by glycine 95 and threonine 98.

It belongs to the fluoride channel Fluc/FEX (TC 1.A.43) family.

The protein resides in the cell membrane. It carries out the reaction fluoride(in) = fluoride(out). Its activity is regulated as follows. Na(+) is not transported, but it plays an essential structural role and its presence is essential for fluoride channel function. Functionally, fluoride-specific ion channel. Important for reducing fluoride concentration in the cell, thus reducing its toxicity. This is Fluoride-specific ion channel FluC from Corynebacterium efficiens (strain DSM 44549 / YS-314 / AJ 12310 / JCM 11189 / NBRC 100395).